A 962-amino-acid polypeptide reads, in one-letter code: RNA-binding protein 15 (962 aa).

Basic and acidic residues-rich tracts occupy residues 1-10 (MRSAGREPLP), 34-52 (LRRD…ERSP), and 59-72 (RGGE…ERSK). The disordered stretch occupies residues 1–167 (MRSAGREPLP…SAPGGGDGVE (167 aa)). The span at 82-94 (GSSSGKTDSGGSR) shows a compositional bias: low complexity. The span at 97-112 (LHLDKSSSRGGSREYE) shows a compositional bias: basic and acidic residues. Ser-108 is modified (phosphoserine). Positions 118–129 (SSSRLHSYSSPS) are enriched in low complexity. Residues 134–149 (SGGGESRSSSRGGGGE) are compositionally biased toward gly residues. A compositionally biased stretch (low complexity) spans 150–159 (SRSSGAASSA). Residues 169 to 251 (KTLKISELGS…RPLKIEAVYV (83 aa)) form the RRM 1 domain. A phosphoserine mark is found at Ser-178, Ser-207, and Ser-209. Residue Lys-245 forms a Glycyl lysine isopeptide (Lys-Gly) (interchain with G-Cter in SUMO2) linkage. 3 positions are modified to phosphoserine: Ser-252, Ser-256, and Ser-258. Residues 257-297 (RSPLDKDAYAPSSSVVGTSVGSHRHAPGGGGGQRSLSPGGA) are disordered. Tyr-265 bears the Phosphotyrosine mark. Residues 268 to 277 (SSSVVGTSVG) show a composition bias toward low complexity. Phosphoserine occurs at positions 291, 293, and 364. RRM domains follow at residues 373 to 450 (RTLF…YGKA) and 454 to 528 (TRLW…FADT). Residues Lys-405, Lys-419, and Lys-444 each participate in a glycyl lysine isopeptide (Lys-Gly) (interchain with G-Cter in SUMO2) cross-link. An N6-acetyllysine modification is found at Lys-449. Composition is skewed to basic and acidic residues over residues 553 to 580 (GHRA…RDLY) and 612 to 661 (SLDR…SERP). The tract at residues 553–779 (GHRAPDPLRS…KQDGGTAPVA (227 aa)) is disordered. A Phosphothreonine modification is found at Thr-567. Residue Arg-577 is modified to Asymmetric dimethylarginine; alternate; by PRMT1. Arg-577 carries the omega-N-methylarginine; alternate; by PRMT1 modification. Residues Ser-621, Ser-655, Ser-670, Ser-674, and Ser-701 each carry the phosphoserine modification. Basic and acidic residues-rich tracts occupy residues 673–692 (RSPE…DRSS), 701–729 (SPVR…AERD), and 742–751 (NPLKKEDRSD). Lys-745 is covalently cross-linked (Glycyl lysine isopeptide (Lys-Gly) (interchain with G-Cter in SUMO2)). Over residues 754-771 (APSASTSSSKQKPPSQKQ) the composition is skewed to low complexity. Phosphoserine is present on residues Ser-768 and Ser-782. Residues 778–957 (VAASSPKLCL…YLVMIIVRAK (180 aa)) enclose the SPOC domain. Residues 866 to 885 (GSSDSRSSSSSATSDTAAST) are disordered. The span at 867-885 (SSDSRSSSSSATSDTAAST) shows a compositional bias: low complexity. Residue Ser-936 is modified to Phosphoserine.

Belongs to the RRM Spen family. Component of the WMM complex, a N6-methyltransferase complex composed of a catalytic subcomplex, named MAC, and of an associated subcomplex, named MACOM. The MAC subcomplex is composed of METTL3 and METTL14. The MACOM subcomplex is composed of WTAP, ZC3H13, CBLL1/HAKAI, VIRMA, and, in some cases of RBM15 (RBM15 or RBM15B). Also a component of a MACOM-like complex, named WTAP complex, composed of WTAP, ZC3H13, CBLL1, VIRMA, RBM15, BCLAF1 and THRAP3. Interacts with RBPJ. Interacts (via SPOC domain) with SETD1B. Interacts with NXF1, the interaction is required to promote mRNA export. Interacts with SF3B1. Post-translationally, methylated at Arg-577 by PRMT1, leading to promote ubiquitination by CNOT4 and subsequent degradation by the proteasome. In terms of processing, ubiquitinated by CNOT4 following methylation at Arg-577 by PRMT1.

It localises to the nucleus speckle. The protein resides in the nucleus. Its subcellular location is the nucleoplasm. It is found in the nucleus envelope. The protein localises to the nucleus membrane. Its function is as follows. RNA-binding protein that acts as a key regulator of N6-methyladenosine (m6A) methylation of RNAs, thereby regulating different processes, such as hematopoietic cell homeostasis, alternative splicing of mRNAs and X chromosome inactivation mediated by Xist RNA. Associated component of the WMM complex, a complex that mediates N6-methyladenosine (m6A) methylation of RNAs, a modification that plays a role in the efficiency of mRNA splicing and RNA processing. Plays a key role in m6A methylation, possibly by binding target RNAs and recruiting the WMM complex. Involved in random X inactivation mediated by Xist RNA: acts by binding Xist RNA and recruiting the WMM complex, which mediates m6A methylation, leading to target YTHDC1 reader on Xist RNA and promoting transcription repression activity of Xist. Required for the development of multiple tissues, such as the maintenance of the homeostasis of long-term hematopoietic stem cells and for megakaryocyte (MK) and B-cell differentiation. Regulates megakaryocyte differentiation by regulating alternative splicing of genes important for megakaryocyte differentiation; probably regulates alternative splicing via m6A regulation. Required for placental vascular branching morphogenesis and embryonic development of the heart and spleen. Acts as a regulator of thrombopoietin response in hematopoietic stem cells by regulating alternative splicing of MPL. May also function as an mRNA export factor, stimulating export and expression of RTE-containing mRNAs which are present in many retrotransposons that require to be exported prior to splicing. High affinity binding of pre-mRNA to RBM15 may allow targeting of the mRNP to the export helicase DBP5 in a manner that is independent of splicing-mediated NXF1 deposition, resulting in export prior to splicing. May be implicated in HOX gene regulation. In Mus musculus (Mouse), this protein is RNA-binding protein 15.